Here is a 177-residue protein sequence, read N- to C-terminus: Bifunctional protein PyrR (177 aa).

The short motif at 97–109 (IILVDDVLYTGRT) is the PRPP-binding element.

The protein belongs to the purine/pyrimidine phosphoribosyltransferase family. PyrR subfamily.

It catalyses the reaction UMP + diphosphate = 5-phospho-alpha-D-ribose 1-diphosphate + uracil. In terms of biological role, regulates the transcription of the pyrimidine nucleotide (pyr) operon in response to exogenous pyrimidines. Its function is as follows. Also displays a weak uracil phosphoribosyltransferase activity which is not physiologically significant. The sequence is that of Bifunctional protein PyrR from Nitrosococcus oceani (strain ATCC 19707 / BCRC 17464 / JCM 30415 / NCIMB 11848 / C-107).